Consider the following 349-residue polypeptide: Ferredoxin--NADP reductase 1 (349 aa).

7 residues coordinate FAD: glutamate 36, lysine 44, tyrosine 48, valine 88, leucine 123, aspartate 290, and serine 331.

It belongs to the ferredoxin--NADP reductase type 2 family. Homodimer. Requires FAD as cofactor.

The enzyme catalyses 2 reduced [2Fe-2S]-[ferredoxin] + NADP(+) + H(+) = 2 oxidized [2Fe-2S]-[ferredoxin] + NADPH. This Bacillus cytotoxicus (strain DSM 22905 / CIP 110041 / 391-98 / NVH 391-98) protein is Ferredoxin--NADP reductase 1.